The primary structure comprises 307 residues: MIRHFLRDDDLSPEEQAEVLTLAADLKKTPFSRRPLEGPRGVAVIFEKNSTRTRFSFEMGIAQLGGHAIVVDGRSTQLGREETLEDTGAVLSRYVDAIVWRTFAQERLTAMASGASVPIVNALSDEFHPCQVLADLQTLAERKGKLAGLRMTYFGDGANNMAHSLMLGGVTAGVHVTIAAPDGFEPDPRFVDAARRRAAETGATVALTKDAKAGADGADVLVTDTWTSMGQENDGLDRVRPFRPFQVNADLLELADPAAVVLHCLPAHRGHEITDEVIDGPQSAVFDEAENRLHAQKALLVWLLEKR.

Residues 50-53 (STRT), Q77, R101, and 128-131 (HPCQ) contribute to the carbamoyl phosphate site. L-ornithine-binding positions include N160, D224, and 228–229 (SM). Residues 264–265 (CL) and R292 contribute to the carbamoyl phosphate site.

Belongs to the aspartate/ornithine carbamoyltransferase superfamily. OTCase family.

The protein resides in the cytoplasm. The catalysed reaction is carbamoyl phosphate + L-ornithine = L-citrulline + phosphate + H(+). Its pathway is amino-acid biosynthesis; L-arginine biosynthesis; L-arginine from L-ornithine and carbamoyl phosphate: step 1/3. With respect to regulation, inhibited by arginine, norvaline. In terms of biological role, reversibly catalyzes the transfer of the carbamoyl group from carbamoyl phosphate (CP) to the N(epsilon) atom of ornithine (ORN) to produce L-citrulline, which is a substrate for argininosuccinate synthetase, the enzyme involved in the final step in arginine biosynthesis. The polypeptide is Ornithine carbamoyltransferase (Mycolicibacterium smegmatis (strain ATCC 700084 / mc(2)155) (Mycobacterium smegmatis)).